Consider the following 354-residue polypeptide: Uroporphyrinogen decarboxylase (354 aa).

Residues 27 to 31, D77, Y154, T209, and H327 contribute to the substrate site; that span reads RQAGR.

Belongs to the uroporphyrinogen decarboxylase family. In terms of assembly, homodimer.

The protein localises to the cytoplasm. It catalyses the reaction uroporphyrinogen III + 4 H(+) = coproporphyrinogen III + 4 CO2. It functions in the pathway porphyrin-containing compound metabolism; protoporphyrin-IX biosynthesis; coproporphyrinogen-III from 5-aminolevulinate: step 4/4. In terms of biological role, catalyzes the decarboxylation of four acetate groups of uroporphyrinogen-III to yield coproporphyrinogen-III. In Escherichia fergusonii (strain ATCC 35469 / DSM 13698 / CCUG 18766 / IAM 14443 / JCM 21226 / LMG 7866 / NBRC 102419 / NCTC 12128 / CDC 0568-73), this protein is Uroporphyrinogen decarboxylase.